Consider the following 66-residue polypeptide: Large ribosomal subunit protein uL29 (66 aa).

Belongs to the universal ribosomal protein uL29 family.

This Bartonella quintana (strain Toulouse) (Rochalimaea quintana) protein is Large ribosomal subunit protein uL29.